We begin with the raw amino-acid sequence, 329 residues long: 31 kDa immunogenic protein (329 aa).

The signal sequence occupies residues 1–28; that stretch reads MKFGSKIRRLAVAAVAGAIALGASFAVA.

The polypeptide is 31 kDa immunogenic protein (bcsP31) (Brucella abortus biovar 1 (strain 9-941)).